The chain runs to 457 residues: Chromosomal replication initiator protein DnaA (457 aa).

Positions 1–71 (MSPSIWEKCL…LLKNFCNINT (71 aa)) are domain I, interacts with DnaA modulators. Residues 71 to 119 (TTPTLMLKICKPKIIQKKFFNELTLKKNILNSKLTYNVNTKLSNIIYSS) form a domain II region. The tract at residues 120–337 (EINTNYTFQN…GALNKILANS (218 aa)) is domain III, AAA+ region. Residues Gly-165, Gly-167, Lys-168, and Thr-169 each contribute to the ATP site. Residues 338-457 (DSKKKIITIN…FLTLLKILSS (120 aa)) form a domain IV, binds dsDNA region.

This sequence belongs to the DnaA family. In terms of assembly, oligomerizes as a right-handed, spiral filament on DNA at oriC.

The protein resides in the cytoplasm. Plays an essential role in the initiation and regulation of chromosomal replication. ATP-DnaA binds to the origin of replication (oriC) to initiate formation of the DNA replication initiation complex once per cell cycle. Binds the DnaA box (a 9 base pair repeat at the origin) and separates the double-stranded (ds)DNA. Forms a right-handed helical filament on oriC DNA; dsDNA binds to the exterior of the filament while single-stranded (ss)DNA is stabiized in the filament's interior. The ATP-DnaA-oriC complex binds and stabilizes one strand of the AT-rich DNA unwinding element (DUE), permitting loading of DNA polymerase. After initiation quickly degrades to an ADP-DnaA complex that is not apt for DNA replication. Binds acidic phospholipids. This is Chromosomal replication initiator protein DnaA from Buchnera aphidicola subsp. Baizongia pistaciae (strain Bp).